We begin with the raw amino-acid sequence, 335 residues long: Putative SWIB domain-containing protein R508 (335 aa).

The span at 1-12 (MSKRVTSSKKSK) shows a compositional bias: basic residues. Residues 1–182 (MSKRVTSSKK…NKKSPKKLLN (182 aa)) form a disordered region. Low complexity predominate over residues 24–33 (KNLSKTSKSV). Residues 60–75 (NIGGSKSSRTYNSEGS) are compositionally biased toward polar residues. The span at 83–109 (SSKDSKVIKKNKQKVESSDSEKHSENK) shows a compositional bias: basic and acidic residues. Positions 110 to 126 (SHKKSSKSSSISRKKPI) are enriched in basic residues. Residues 163 to 173 (KGEDNNDEKQN) show a composition bias toward basic and acidic residues. The stretch at 181–217 (LNEKKISSESFDDKLNELREELRENYIRQKKIMNDIK) forms a coiled coil. One can recognise an SWIB/MDM2 domain in the interval 244-326 (GFNKPQTVPQ…QTWLKKVYNE (83 aa)).

The chain is Putative SWIB domain-containing protein R508 from Acanthamoeba polyphaga mimivirus (APMV).